The following is a 153-amino-acid chain: SsrA-binding protein (153 aa).

The span at Ala132–Ala142 shows a compositional bias: basic and acidic residues. The tract at residues Ala132–Tyr153 is disordered.

Belongs to the SmpB family.

The protein resides in the cytoplasm. In terms of biological role, required for rescue of stalled ribosomes mediated by trans-translation. Binds to transfer-messenger RNA (tmRNA), required for stable association of tmRNA with ribosomes. tmRNA and SmpB together mimic tRNA shape, replacing the anticodon stem-loop with SmpB. tmRNA is encoded by the ssrA gene; the 2 termini fold to resemble tRNA(Ala) and it encodes a 'tag peptide', a short internal open reading frame. During trans-translation Ala-aminoacylated tmRNA acts like a tRNA, entering the A-site of stalled ribosomes, displacing the stalled mRNA. The ribosome then switches to translate the ORF on the tmRNA; the nascent peptide is terminated with the 'tag peptide' encoded by the tmRNA and targeted for degradation. The ribosome is freed to recommence translation, which seems to be the essential function of trans-translation. The sequence is that of SsrA-binding protein from Campylobacter hominis (strain ATCC BAA-381 / DSM 21671 / CCUG 45161 / LMG 19568 / NCTC 13146 / CH001A).